Here is a 460-residue protein sequence, read N- to C-terminus: TNF receptor-associated factor family protein DDB_G0290883 (460 aa).

The RING-type; degenerate zinc-finger motif lies at Cys-27–Lys-67. 2 TRAF-type zinc fingers span residues Ser-141–Leu-194 and Thr-196–Gln-253. An MATH domain is found at Gly-320 to Ile-448.

This sequence belongs to the TNF receptor-associated factor family. A subfamily.

Its subcellular location is the cytoplasm. Functionally, probable adapter protein and signal transducer that links members of the tumor necrosis factor receptor family to different signaling pathways by association with the receptor cytoplasmic domain and kinases. This is TNF receptor-associated factor family protein DDB_G0290883 from Dictyostelium discoideum (Social amoeba).